The chain runs to 229 residues: Ribose-5-phosphate isomerase A (229 aa).

Residues 28–31, 85–88, and 98–101 each bind substrate; these read TGST, DGAD, and KGRG. The active-site Proton acceptor is the E107. K125 contributes to the substrate binding site.

The protein belongs to the ribose 5-phosphate isomerase family. As to quaternary structure, homodimer.

The catalysed reaction is aldehydo-D-ribose 5-phosphate = D-ribulose 5-phosphate. Its pathway is carbohydrate degradation; pentose phosphate pathway; D-ribose 5-phosphate from D-ribulose 5-phosphate (non-oxidative stage): step 1/1. Its function is as follows. Catalyzes the reversible conversion of ribose-5-phosphate to ribulose 5-phosphate. The sequence is that of Ribose-5-phosphate isomerase A from Thermococcus kodakarensis (strain ATCC BAA-918 / JCM 12380 / KOD1) (Pyrococcus kodakaraensis (strain KOD1)).